We begin with the raw amino-acid sequence, 58 residues long: Large ribosomal subunit protein bL32 (58 aa).

It belongs to the bacterial ribosomal protein bL32 family.

The sequence is that of Large ribosomal subunit protein bL32 from Thermobifida fusca (strain YX).